A 466-amino-acid chain; its full sequence is Probable Xaa-Pro aminopeptidase pepP (466 aa).

4 residues coordinate Mn(2+): aspartate 264, aspartate 275, glutamate 398, and glutamate 438.

Belongs to the peptidase M24B family. Requires Mn(2+) as cofactor.

It carries out the reaction Release of any N-terminal amino acid, including proline, that is linked to proline, even from a dipeptide or tripeptide.. Functionally, catalyzes the removal of a penultimate prolyl residue from the N-termini of peptides. The protein is Probable Xaa-Pro aminopeptidase pepP (pepP) of Aspergillus niger (strain ATCC MYA-4892 / CBS 513.88 / FGSC A1513).